We begin with the raw amino-acid sequence, 426 residues long: MRLSEFYSPTVKNVSSDVVSASHKYSIRAGIVSQTASGIYTLLPLGLMVLRKVENIIREEINAVGFSEILMPTMQPADLWKESQRYDSYGQELIRIHDRGGREMVLGPTHEEVVTDLVRSSLKSYRDLPVNLYQIQWKFRDELRPRNGILRSREFLMMDAYSFDTDFEKAMKTYDAVFRAYRKAFKRMNLQTIALKADMGAIGGSVSHEFHVLTPTGESTVYYDERALELSEMNDYGIEELKEVYAATDDMHDEKSCGIAPEDLKTARGIEVGHIFYLDDRYSRTMNVKFCNTDGHSGTHVKMGCYGIGISRLIGALIEVFHDDAGIKWPLSVAPFKVGIVNLFSKNEECKRVSERIHSVLPNDSLYDDRDDTPGVKLSRMDLIGLPWQVIVGNSFIKDGVLELKNRATGDIELLSVDDVVSRISV.

It belongs to the class-II aminoacyl-tRNA synthetase family. ProS type 2 subfamily. Homodimer.

It localises to the cytoplasm. The enzyme catalyses tRNA(Pro) + L-proline + ATP = L-prolyl-tRNA(Pro) + AMP + diphosphate. Functionally, catalyzes the attachment of proline to tRNA(Pro) in a two-step reaction: proline is first activated by ATP to form Pro-AMP and then transferred to the acceptor end of tRNA(Pro). The polypeptide is Proline--tRNA ligase (Anaplasma phagocytophilum (strain HZ)).